The following is a 702-amino-acid chain: Ribosomal RNA large subunit methyltransferase K/L (702 aa).

The region spanning 43–154 is the THUMP domain; sequence LVYQSLMWSR…KETASIALDL (112 aa).

The protein belongs to the methyltransferase superfamily. RlmKL family.

It is found in the cytoplasm. It catalyses the reaction guanosine(2445) in 23S rRNA + S-adenosyl-L-methionine = N(2)-methylguanosine(2445) in 23S rRNA + S-adenosyl-L-homocysteine + H(+). The enzyme catalyses guanosine(2069) in 23S rRNA + S-adenosyl-L-methionine = N(2)-methylguanosine(2069) in 23S rRNA + S-adenosyl-L-homocysteine + H(+). Functionally, specifically methylates the guanine in position 2445 (m2G2445) and the guanine in position 2069 (m7G2069) of 23S rRNA. This chain is Ribosomal RNA large subunit methyltransferase K/L, found in Escherichia coli (strain K12 / DH10B).